Here is a 311-residue protein sequence, read N- to C-terminus: 4-hydroxy-tetrahydrodipicolinate synthase (311 aa).

Residue threonine 51 participates in pyruvate binding. Tyrosine 140 acts as the Proton donor/acceptor in catalysis. Lysine 168 functions as the Schiff-base intermediate with substrate in the catalytic mechanism. Position 209 (isoleucine 209) interacts with pyruvate.

This sequence belongs to the DapA family. In terms of assembly, homotetramer; dimer of dimers.

It localises to the cytoplasm. It catalyses the reaction L-aspartate 4-semialdehyde + pyruvate = (2S,4S)-4-hydroxy-2,3,4,5-tetrahydrodipicolinate + H2O + H(+). It functions in the pathway amino-acid biosynthesis; L-lysine biosynthesis via DAP pathway; (S)-tetrahydrodipicolinate from L-aspartate: step 3/4. In terms of biological role, catalyzes the condensation of (S)-aspartate-beta-semialdehyde [(S)-ASA] and pyruvate to 4-hydroxy-tetrahydrodipicolinate (HTPA). The protein is 4-hydroxy-tetrahydrodipicolinate synthase of Streptococcus suis (strain 98HAH33).